The primary structure comprises 74 residues: Serine protease inhibitor Kazal-type 7 (74 aa).

Residues 1–17 (MKLLGGLLLLFTATCLC) form the signal peptide. In terms of domain architecture, Kazal-like spans 18–74 (NVDCDIYKKYPVVAIPCPIENIPVCGSDYITYGNKCKLCTEILRSNGKIQFLHEGHC). 3 cysteine pairs are disulfide-bonded: C21–C56, C34–C53, and C42–C74.

It localises to the secreted. In terms of biological role, probable serine protease inhibitor. The chain is Serine protease inhibitor Kazal-type 7 (Spink7) from Rattus norvegicus (Rat).